The sequence spans 185 residues: Protein N-terminal glutamine amidohydrolase (185 aa).

Residues C14, H62, and D78 contribute to the active site.

This sequence belongs to the NTAQ1 family. In terms of assembly, monomer.

The enzyme catalyses N-terminal L-glutaminyl-[protein] + H2O = N-terminal L-glutamyl-[protein] + NH4(+). Functionally, mediates the side-chain deamidation of N-terminal glutamine residues to glutamate, an important step in N-end rule pathway of protein degradation. Conversion of the resulting N-terminal glutamine to glutamate renders the protein susceptible to arginylation, polyubiquitination and degradation as specified by the N-end rule. Does not act on substrates with internal or C-terminal glutamine and does not act on non-glutamine residues in any position. The polypeptide is Protein N-terminal glutamine amidohydrolase (Caenorhabditis briggsae).